The following is a 998-amino-acid chain: MGQASSHSENDLFISHLKESLKVRRIRVRKKDLVSFFSFIFKTCPWFPQEGSIDSRVWGRVGDCLNDYYRVFGPETIPITTFNYYNLIRDVLTNQSDSPDIQRLCKEGHKILISHSRPPSRQAPVTITTSEKASSRPPSRAPSTCPSVAIDIGSHDTGQSSLYPNLATLTDPPIQSPHSRAHTPPQHLPLLANSKTLHNSGSQDDQLNPADQADLEEAAAQYNNPDWPQLTNTPALPPFRPPSYVSTAVPPVAVAAPVLHAPTSGVPGSPTAPNLPGVALAKPSGPIDETVSLLDGVKTLVTKLSDLALLPPAGVMAFPVTRSQGQVSSNTTGRASPHPDTHTIPEEEEADSGESDSEDDEEESSEPTEPTYTHSYKRLNLKTIEKIKTAVANYGPTAPFTVALVESLSERWLTPSDWFFLSRAALSGGDNILWKSEYEDISKQFAERTRVRPPPKDGPLKIPGASPYQNNDKQAQFPPGLLTQIQSAGLKAWKRLPQKGAATTSLAKIRQGPDESYSDFVSRLQETADRLFGSGESESSFVKHLAYENANPACQSAIRPFRQKELSTMSPLLWYCSAHAVGLAIGAALQNLAPAQLLEPRPAFAIIVTNPAIFQETAPKKIQPPTQLPTQPNAPQASLIKNLGPTTKCPRCKKGFHWASECRSRLDINGQPIIKQGNLEQGPAPGPHYRDELRGFTVHPPIPPANPCPPSNQPRRYVTDLWRATAGSAGLDLCTTTDTILTTQNSPLTLPVGIYGPLPPQTFGLILAEPALPSKGIQVLPGILDNDFEGEIHIILSTTKDLVTIPKGTRLAQIVILPLQQINSNFHKPYRGASAPGSSDVYWVQQISQQRPTLKLKLNGKLFSGILDTGADATVISYTHWPRNWPLTTVATHLRGIGQATNPQQSAQMLKWEDSEGNNGHITPYVLPNLPVNLWGRDILSQMKLVMCSPNDTVMTQMLSQGYLPGQGLGKNNQGITQPITITPKKDKTGLGFHQNLP.

Gly-2 is lipidated: N-myristoyl glycine; by host. Disordered regions lie at residues 115-208, 323-376, and 446-469; these read HSRP…DQLN, SQGQ…THSY, and AERT…SPYQ. Polar residues-rich tracts occupy residues 117–132, 193–206, and 323–334; these read RPPS…TSEK, NSKT…QDDQ, and SQGQVSSNTTGR. Over residues 346 to 366 the composition is skewed to acidic residues; that stretch reads EEEEADSGESDSEDDEEESSE. A compositionally biased stretch (basic and acidic residues) spans 446-459; the sequence is AERTRVRPPPKDGP. Positions 863–939 constitute a Peptidase A2 domain; the sequence is FSGILDTGAD…LPVNLWGRDI (77 aa). The active-site Protease; shared with dimeric partner is Asp-868. One can recognise a G-patch domain in the interval 950 to 996; that stretch reads PNDTVMTQMLSQGYLPGQGLGKNNQGITQPITITPKKDKTGLGFHQN.

As to quaternary structure, homodimer. In terms of assembly, interacts with the reverse transcriptase/ribonuclease H. Nucleocapsid protein-dUTPase: Homotrimer. Homotrimer. Post-translationally, myristoylated. Myristoylation of the matrix (MA) domain mediates the transport and binding of Gag polyproteins to the host plasma membrane and is required for the assembly of viral particles. In terms of processing, specific enzymatic cleavages in vivo yield mature proteins.

It localises to the virion. The enzyme catalyses dUTP + H2O = dUMP + diphosphate + H(+). In terms of biological role, matrix protein p10: Matrix protein. Nucleocapsid protein p14: Nucleocapsid protein. Functionally, capsid protein p27: capsid protein. Its function is as follows. The aspartyl protease mediates proteolytic cleavages of Gag and Gag-Pol polyproteins during or shortly after the release of the virion from the plasma membrane. Cleavages take place as an ordered, step-wise cascade to yield mature proteins. This process is called maturation. Displays maximal activity during the budding process just prior to particle release from the cell. In terms of biological role, enhances the activity of the reverse transcriptase. May be part of the mature RT. In Mammalia (SMRV-H), this protein is Gag-Pro polyprotein (pro).